The following is a 359-amino-acid chain: Cytochrome c oxidase subunit 2 (359 aa).

The N-terminal stretch at 1 to 28 is a signal peptide; that stretch reads MEQQNKRGLKRKALLGGVLGSGGLAMAG. The N-palmitoyl cysteine moiety is linked to residue C29. C29 carries the S-diacylglycerol cysteine lipid modification. 2 helical membrane-spanning segments follow: residues 64–84 and 107–127; these read VWVA…TAIF and VPLE…LFFF. Cu cation-binding residues include H244, C285, E287, C289, H293, and M296. The disordered stretch occupies residues 338–359; that stretch reads STAPFVSDRTGTRDGENFQTPA.

This sequence belongs to the cytochrome c oxidase subunit 2 family. Associates with subunits I, III and IV to form cytochrome c oxidase. It depends on binuclear copper center (CuA) as a cofactor.

The protein resides in the cell membrane. The catalysed reaction is 4 Fe(II)-[cytochrome c] + O2 + 8 H(+)(in) = 4 Fe(III)-[cytochrome c] + 2 H2O + 4 H(+)(out). Subunits I and II form the functional core of the enzyme complex. Electrons originating in cytochrome c are transferred via heme a and Cu(A) to the binuclear center formed by heme a3 and Cu(B). The sequence is that of Cytochrome c oxidase subunit 2 (ctaC) from Corynebacterium efficiens (strain DSM 44549 / YS-314 / AJ 12310 / JCM 11189 / NBRC 100395).